A 61-amino-acid chain; its full sequence is Short neurotoxin 1 (61 aa).

4 disulfide bridges follow: cysteine 3-cysteine 23, cysteine 17-cysteine 40, cysteine 42-cysteine 53, and cysteine 54-cysteine 59.

This sequence belongs to the three-finger toxin family. Short-chain subfamily. Type I alpha-neurotoxin sub-subfamily. As to expression, expressed by the venom gland.

The protein resides in the secreted. In terms of biological role, binds with high affinity to muscular nicotinic acetylcholine receptors (nAChRs) (tested on Torpedo marmorata AChR, Kd=0.07 nM) and with low affinity to neuronal alpha-7/CHRNA7 nAChRs (tested on chimeric receptor, Kd=3 uM) and inhibit acetylcholine from binding to the receptor, thereby impairing neuromuscular transmission. Produces peripheral paralysis by blocking neuromuscular transmission at the postsynaptic site. The protein is Short neurotoxin 1 of Naja pallida (Red spitting cobra).